The primary structure comprises 472 residues: ATP synthase subunit beta (472 aa).

156-163 (GGAGVGKT) is a binding site for ATP.

Belongs to the ATPase alpha/beta chains family. F-type ATPases have 2 components, CF(1) - the catalytic core - and CF(0) - the membrane proton channel. CF(1) has five subunits: alpha(3), beta(3), gamma(1), delta(1), epsilon(1). CF(0) has three main subunits: a(1), b(2) and c(9-12). The alpha and beta chains form an alternating ring which encloses part of the gamma chain. CF(1) is attached to CF(0) by a central stalk formed by the gamma and epsilon chains, while a peripheral stalk is formed by the delta and b chains.

The protein localises to the cell membrane. It carries out the reaction ATP + H2O + 4 H(+)(in) = ADP + phosphate + 5 H(+)(out). Functionally, produces ATP from ADP in the presence of a proton gradient across the membrane. The catalytic sites are hosted primarily by the beta subunits. This Symbiobacterium thermophilum (strain DSM 24528 / JCM 14929 / IAM 14863 / T) protein is ATP synthase subunit beta.